A 652-amino-acid polypeptide reads, in one-letter code: DNA ligase (652 aa).

NAD(+) contacts are provided by residues Asp29–Asp33, Ser78–Leu79, and Glu107. Lys109 acts as the N6-AMP-lysine intermediate in catalysis. Arg130, Glu164, Lys278, and Lys302 together coordinate NAD(+). Residues Cys395, Cys398, Cys413, and Cys418 each contribute to the Zn(2+) site. Residues Asn577–Leu652 enclose the BRCT domain.

The protein belongs to the NAD-dependent DNA ligase family. LigA subfamily. Requires Mg(2+) as cofactor. Mn(2+) is required as a cofactor.

It catalyses the reaction NAD(+) + (deoxyribonucleotide)n-3'-hydroxyl + 5'-phospho-(deoxyribonucleotide)m = (deoxyribonucleotide)n+m + AMP + beta-nicotinamide D-nucleotide.. DNA ligase that catalyzes the formation of phosphodiester linkages between 5'-phosphoryl and 3'-hydroxyl groups in double-stranded DNA using NAD as a coenzyme and as the energy source for the reaction. It is essential for DNA replication and repair of damaged DNA. This Streptococcus pyogenes serotype M49 (strain NZ131) protein is DNA ligase.